The primary structure comprises 467 residues: Replication factor A 51 kDa subunit (467 aa).

Residues 23–105 (WWIRARVADK…SNVNNDYELT (83 aa)) constitute a DNA-binding region (OB). The segment at 313–335 (CPTCNKKVTEEGAQGDRFRCEKC) adopts a C4-type zinc-finger fold.

It belongs to the replication factor A protein 1 family. In terms of assembly, component of the heterotrimeric canonical replication protein A complex (RPA). Post-translationally, the N-terminus is blocked.

The protein localises to the nucleus. In terms of biological role, as part of the heterotrimeric replication protein A complex (RPA/RP-A), binds and stabilizes single-stranded DNA intermediates, that form during DNA replication or upon DNA stress. It prevents their reannealing and in parallel, recruits and activates different proteins and complexes involved in DNA metabolism. Thereby, it plays an essential role both in DNA replication and the cellular response to DNA damage. The chain is Replication factor A 51 kDa subunit (RPA1) from Crithidia fasciculata.